The sequence spans 317 residues: Beta-ketoacyl-[acyl-carrier-protein] synthase III (317 aa).

Catalysis depends on residues Cys-112 and His-244. The tract at residues 245-249 (QANLR) is ACP-binding. The active site involves Asn-274.

This sequence belongs to the thiolase-like superfamily. FabH family. In terms of assembly, homodimer.

The protein resides in the cytoplasm. The enzyme catalyses malonyl-[ACP] + acetyl-CoA + H(+) = 3-oxobutanoyl-[ACP] + CO2 + CoA. Its pathway is lipid metabolism; fatty acid biosynthesis. In terms of biological role, catalyzes the condensation reaction of fatty acid synthesis by the addition to an acyl acceptor of two carbons from malonyl-ACP. Catalyzes the first condensation reaction which initiates fatty acid synthesis and may therefore play a role in governing the total rate of fatty acid production. Possesses both acetoacetyl-ACP synthase and acetyl transacylase activities. Its substrate specificity determines the biosynthesis of branched-chain and/or straight-chain of fatty acids. The protein is Beta-ketoacyl-[acyl-carrier-protein] synthase III of Salmonella typhi.